A 300-amino-acid polypeptide reads, in one-letter code: D-alanine--D-alanine ligase (300 aa).

The ATP-grasp domain occupies 99-293; sequence KKILKYANIN…FAELLNSIVK (195 aa). An ATP-binding site is contributed by 126-181; that stretch reads IEKIGYPVFVKPNSGGSSVATNLVKNKEGIKEAVELALKYDKEVMIENYTKGEEIT. 3 residues coordinate Mg(2+): D248, E260, and N262.

The protein belongs to the D-alanine--D-alanine ligase family. Mg(2+) serves as cofactor. The cofactor is Mn(2+).

It is found in the cytoplasm. The enzyme catalyses 2 D-alanine + ATP = D-alanyl-D-alanine + ADP + phosphate + H(+). It functions in the pathway cell wall biogenesis; peptidoglycan biosynthesis. Functionally, cell wall formation. The chain is D-alanine--D-alanine ligase from Clostridium botulinum (strain Loch Maree / Type A3).